A 293-amino-acid polypeptide reads, in one-letter code: Ribonuclease HIII (293 aa).

Residues 78–293 enclose the RNase H type-2 domain; it reads LPLIGTDEVG…TEKAKKRLER (216 aa). A divalent metal cation contacts are provided by D84, E85, and D187.

It belongs to the RNase HII family. RnhC subfamily. It depends on Mn(2+) as a cofactor. Mg(2+) serves as cofactor.

The protein localises to the cytoplasm. The enzyme catalyses Endonucleolytic cleavage to 5'-phosphomonoester.. Endonuclease that specifically degrades the RNA of RNA-DNA hybrids. The chain is Ribonuclease HIII from Streptococcus pneumoniae (strain JJA).